A 565-amino-acid polypeptide reads, in one-letter code: uncharacterized protein (565 aa).

The signal sequence occupies residues 1–21 (MKIPSQQVLLALPLLASPAQS). 2 N-linked (GlcNAc...) asparagine glycosylation sites follow: N46 and N88. In terms of domain architecture, FAD-binding PCMH-type spans 118–302 (QGIVPYYSVS…TSVTYKTHPK (185 aa)). H155 bears the Pros-8alpha-FAD histidine mark. N-linked (GlcNAc...) asparagine glycosylation is found at N191, N314, N364, N371, and N484.

This sequence belongs to the oxygen-dependent FAD-linked oxidoreductase family. FAD serves as cofactor.

The protein localises to the secreted. This is an uncharacterized protein from Arthroderma benhamiae (strain ATCC MYA-4681 / CBS 112371) (Trichophyton mentagrophytes).